Reading from the N-terminus, the 658-residue chain is Endoglin (658 aa).

The N-terminal stretch at 1 to 25 is a signal peptide; the sequence is MDRGTLPLAVALLLASCSLSPTSLA. The segment at 26-46 is OR1, N-terminal part; that stretch reads ETVHCDLQPVGPERGEVTYTT. The segment at 26-337 is required for interaction with GDF2; sequence ETVHCDLQPV…SSCGGRLQTS (312 aa). Over 26 to 586 the chain is Extracellular; that stretch reads ETVHCDLQPV…PDLSGCTSKG (561 aa). Disulfide bonds link cysteine 30-cysteine 207, cysteine 53-cysteine 182, cysteine 242-cysteine 330, cysteine 350-cysteine 382, cysteine 363-cysteine 442, cysteine 394-cysteine 412, and cysteine 493-cysteine 549. The interval 47 to 199 is OR2; sequence SQVSKGCVAQ…MGRTLEWRPR (153 aa). Residues asparagine 88, asparagine 102, asparagine 121, and asparagine 134 are each glycosylated (N-linked (GlcNAc...) asparagine). An OR1, C-terminal part region spans residues 200-330; the sequence is TPALVRGCHL…SIVSLHASSC (131 aa). Residues 270-282 are essential for interaction with GDF2; sequence QIWTTGEYSFKIF. A glycan (N-linked (GlcNAc...) asparagine) is linked at asparagine 307. The 171-residue stretch at 363–533 folds into the ZP domain; that stretch reads CADDAMTLVL…PEGDPRFSFL (171 aa). The Cell attachment site motif lies at 399–401; sequence RGD. The helical transmembrane segment at 587–611 threads the bilayer; the sequence is LVLPAVLGITFGAFLIGALLTAALW. Over 612–658 the chain is Cytoplasmic; that stretch reads YIYSHTRSPSKREPVVAVAAPASSESSSTNHSIGSTQSTPCSTSSMA. Low complexity predominate over residues 626–639; it reads VVAVAAPASSESSS. The interval 626 to 658 is disordered; the sequence is VVAVAAPASSESSSTNHSIGSTQSTPCSTSSMA. The span at 640–658 shows a compositional bias: polar residues; it reads TNHSIGSTQSTPCSTSSMA. Phosphoserine; by TGFBR1 is present on residues serine 646 and serine 649.

As to quaternary structure, homodimer; disulfide-linked. Forms a heteromeric complex with the signaling receptors for transforming growth factor-beta: TGFBR1 and/or TGFBR2. It is able to bind TGFB1 and TGFB2 with high affinity, but not TGFB3. Interacts with GDF2, forming a heterotetramer with a 2:2 stoichiometry. Interacts with ACVRL1. Can form a heteromeric complex with GDF2 and ACVRL1. Interacts with BMP10. Interacts with DYNLT4. Interacts with ARRB2. As to expression, detected on umbilical veil endothelial cells. Detected in placenta (at protein level). Detected on endothelial cells.

The protein localises to the cell membrane. Its function is as follows. Vascular endothelium glycoprotein that plays an important role in the regulation of angiogenesis. Required for normal structure and integrity of adult vasculature. Regulates the migration of vascular endothelial cells. Required for normal extraembryonic angiogenesis and for embryonic heart development. May regulate endothelial cell shape changes in response to blood flow, which drive vascular remodeling and establishment of normal vascular morphology during angiogenesis. May play a critical role in the binding of endothelial cells to integrins and/or other RGD receptors. Acts as a TGF-beta coreceptor and is involved in the TGF-beta/BMP signaling cascade that ultimately leads to the activation of SMAD transcription factors. Required for GDF2/BMP9 signaling through SMAD1 in endothelial cells and modulates TGFB1 signaling through SMAD3. The chain is Endoglin (ENG) from Homo sapiens (Human).